Here is a 1264-residue protein sequence, read N- to C-terminus: BRCA2-interacting transcriptional repressor EMSY (1264 aa).

An interaction with BRCA2 region spans residues 1-442 (MPVVWPTLLD…LPKPVTATLP (442 aa)). Residues 16–114 (CKRILRKLEL…EWSIEGRRLV (99 aa)) enclose the ENT domain. The interaction with ZMYND11 stretch occupies residues 118–122 (PRLVP). Residues 145-179 (PVPAETASKDGVSCSDEDEKPRKRRRTNSSSSSPV) form a disordered region. Threonine 171 carries the phosphothreonine modification. Phosphoserine is present on residues serine 173 and serine 177. O-linked (GlcNAc) serine glycans are attached at residues serine 192 and serine 200. At serine 202 the chain carries Phosphoserine. Threonine 235 carries an O-linked (GlcNAc) threonine glycan. Residues 364–406 (FPKQHQQSPKQQLQQVQQQTQQPVAQPSSVSQQQQPQQSALPP) show a composition bias toward low complexity. The segment at 364-407 (FPKQHQQSPKQQLQQVQQQTQQPVAQPSSVSQQQQPQQSALPPG) is disordered. 2 O-linked (GlcNAc) threonine glycosylation sites follow: threonine 465 and threonine 470. Serine 521 is a glycosylation site (O-linked (GlcNAc) serine). Residues 660–671 (SRVADASNSSAQ) are compositionally biased toward polar residues. A disordered region spans residues 660–700 (SRVADASNSSAQEGKEEPQGYTDSSSSSTESSQSSQDSQPV). Residues 681–698 (TDSSSSSTESSQSSQDSQ) show a composition bias toward low complexity. Serine 782 and serine 785 each carry phosphoserine. The O-linked (GlcNAc) threonine glycan is linked to threonine 1069. A Phosphoserine modification is found at serine 1085. Positions 1232 to 1264 (QLDDDETAMEQDIDSSTEDGTEPSPSQSAVERS) are disordered. The span at 1233–1252 (LDDDETAMEQDIDSSTEDGT) shows a compositional bias: acidic residues. Over residues 1254–1264 (PSPSQSAVERS) the composition is skewed to polar residues.

In terms of assembly, homodimer. Interacts with the transactivation domain of BRCA2. Interacts with CBX1 (via chromoshadow domain). Interacts with ZMYND11. Does not interact with CBX3 or CBX5. Component of a nuclear receptor-mediated transcription complex composed of at least ZNF335, CCAR2 and EMSY; the complex stimulates the transcription of nuclear receptor target genes such as SOX9 and HOXA1. Within the complex interacts with CCAR2 and ZNF335. Components of this complex may associate with components of a histone methylation complex to form a complex at least composed of ZNF335, HCFC1, CCAR2, EMSY, MKI67, RBBP5, ASH2L and WDR5. Within this complex, interacts with ASH2L and RBBP5.

The protein localises to the nucleus. Regulator which is able to repress transcription, possibly via its interaction with a multiprotein chromatin remodeling complex that modifies the chromatin. Its interaction with BRCA2 suggests that it may play a central role in the DNA repair function of BRCA2. Mediates ligand-dependent transcriptional activation by nuclear hormone receptors. In Mus musculus (Mouse), this protein is BRCA2-interacting transcriptional repressor EMSY.